The chain runs to 318 residues: Tumor necrosis factor ligand superfamily member 11 (318 aa).

At 1 to 47 the chain is on the cytoplasmic side; the sequence is MRRANRDYGKYLRGSEEMGSCPGVPHEGPLHPAPSAPAPAPPPAASR. The segment at 13–41 is disordered; sequence RGSEEMGSCPGVPHEGPLHPAPSAPAPAP. Positions 31–41 are enriched in pro residues; the sequence is HPAPSAPAPAP. The helical; Signal-anchor for type II membrane protein transmembrane segment at 48–68 threads the bilayer; the sequence is FMFLALLGLGLGQVVCSIALF. Over 69 to 318 the chain is Extracellular; that stretch reads LYFRAQMDPN…FGAFKVQDID (250 aa). The region spanning 165–314 is the THD domain; the sequence is PFAHLTINAA…DATYFGAFKV (150 aa). 2 N-linked (GlcNAc...) asparagine glycosylation sites follow: Asn-199 and Asn-264.

The protein belongs to the tumor necrosis factor family. As to quaternary structure, homotrimer. Interacts with TNFRSF11A and TNFRSF11B. Interacts with FBN1 (via N-terminal domain) in a Ca(+2)-dependent manner. Interacts with TNFAIP6 (via both Link and CUB domains). The soluble form derives from the membrane form by proteolytic processing. Highly expressed in thymus and bone tissues.

It localises to the cell membrane. The protein resides in the secreted. Functionally, cytokine that binds to TNFRSF11B/OPG and to TNFRSF11A/RANK. Osteoclast differentiation and activation factor. Augments the ability of dendritic cells to stimulate naive T-cell proliferation. May be an important regulator of interactions between T-cells and dendritic cells and may play a role in the regulation of the T-cell-dependent immune response. May also play an important role in enhanced bone-resorption in humoral hypercalcemia of malignancy. Induces osteoclastogenesis by activating multiple signaling pathways in osteoclast precursor cells, chief among which is induction of long lasting oscillations in the intracellular concentration of Ca (2+) resulting in the activation of NFATC1, which translocates to the nucleus and induces osteoclast-specific gene transcription to allow differentiation of osteoclasts. During osteoclast differentiation, in a TMEM64 and ATP2A2-dependent manner induces activation of CREB1 and mitochondrial ROS generation necessary for proper osteoclast generation. The chain is Tumor necrosis factor ligand superfamily member 11 (Tnfsf11) from Rattus norvegicus (Rat).